The sequence spans 678 residues: AAC-rich mRNA clone AAC4 protein (678 aa).

Positions N55–N73 are enriched in low complexity. The segment at N55–S75 is disordered. A helical transmembrane segment spans residues I243–Y263. Low complexity predominate over residues N318–N346. Residues N318–Q347 are disordered.

Its subcellular location is the membrane. The protein is AAC-rich mRNA clone AAC4 protein (AAC4) of Dictyostelium discoideum (Social amoeba).